A 186-amino-acid polypeptide reads, in one-letter code: TATA-box-binding protein D (186 aa).

A run of 2 repeats spans residues 10–86 (IENV…VEDL) and 101–179 (VQNI…HERL).

It belongs to the TBP family.

Its function is as follows. General factor that plays a role in the activation of archaeal genes transcribed by RNA polymerase. Binds specifically to the TATA box promoter element which lies close to the position of transcription initiation. The protein is TATA-box-binding protein D (tbpD) of Halobacterium salinarum (strain ATCC 700922 / JCM 11081 / NRC-1) (Halobacterium halobium).